The chain runs to 565 residues: Perivitellin-2 67 kDa subunit (565 aa).

A signal peptide spans 1–26; it reads MSQLRWWVVSQVLLLIAICSLDHSEG. One can recognise an MACPF domain in the interval 27 to 340; it reads ARVCPKIVPG…AKVANLDRLT (314 aa). Positions 387–565 are invertebrate MACPF Accessory Domain (IMAD); sequence VPAWFSDRTT…CGMSWALIAK (179 aa).

Perivitellin-2 is a dimer of heterodimers held together head-to-tail by non-covalent forces. The heterodimer is composed of the tachylectin subunit (31 kDa) and the MACPF subunit (67 kDa) that are disulfide-linked. PV2 is a very high density lipoprotein (VHDL). It contains 3.75% of lipids. The major lipid classes are free sterols and phospholipids and also have significant quantities of energy-providing triacylglycerides and free fatty acids. As to expression, produced by albumen secretory cells. Found in developing eggs.

The protein localises to the secreted. It localises to the target cell membrane. Functionally, the egg defensive protein perivitellin-2 is a pore-forming two-subunit glycoprotein that affects both the nervous and digestive systems of mammals. In addition, it is a source of both structural and energetic molecules during embryonic development. The tachylectin subunit (31 kDa) binds target membranes while the MACPF subunit (67 kDa) disrupts lipid bilayers forming large pores (inner diameter of about 5.6 nm) altering the plasma membrance conductance. Both in vivo and in vitro, the protein shows wide pH range stability and is resistant to enzymatic proteolysis from gastrointestinal environments. It is cytotoxic to both epithelial and immune cells from the digestive system of mammals. It induces enterocyte death by a lytic mechanism and disrupts enterocyte monolayers in a dose-dependent manner. After oral administration to mice, it binds enterocytes and induces large dose-dependent morphological changes on their small intestine mucosa, reducing the absorptive surface. Additionally, it is detected in the Peyer's patches where it activates lymphoid follicles and triggers apoptosis. The toxin can also traverse the intestinal barrier and induce oral adaptive immunity with evidence of circulating antibody response. The toxin also shows hemagglutination properties thanks to the tachylectin subunit, but has no hemolytic activity. In addition to enterotoxin activity, the toxin also acts as a neurotoxin, since an intraperitoneal injection can induce paralysis of the mice rear limbs, followed by death. The chain is Perivitellin-2 67 kDa subunit from Pomacea maculata (Giant applesnail).